A 1072-amino-acid polypeptide reads, in one-letter code: Carbamoyl phosphate synthase large chain (1072 aa).

A carboxyphosphate synthetic domain region spans residues 1 to 401 (MPKYKDINKV…SLLKAVRSLE (401 aa)). R129, R169, G175, G176, K208, L210, E215, G241, V242, H243, Q284, and E298 together coordinate ATP. In terms of domain architecture, ATP-grasp 1 spans 133 to 327 (KRKMQEIGEP…IAKVAAKIAI (195 aa)). Residues Q284, E298, and N300 each contribute to the Mg(2+) site. Residues Q284, E298, and N300 each coordinate Mn(2+). Positions 402 to 544 (IKAYGLRLNN…YIYSTYGEED (143 aa)) are oligomerization domain. The carbamoyl phosphate synthetic domain stretch occupies residues 545-929 (EVEIHEIPKV…ALYKALEGAG (385 aa)). The 191-residue stretch at 671–861 (SKLLKELNIN…MVKLAVEVAL (191 aa)) folds into the ATP-grasp 2 domain. Residues R707, K746, I748, E752, G777, V778, H779, S780, Q820, and E832 each contribute to the ATP site. Mg(2+) contacts are provided by Q820, E832, and N834. Mn(2+) contacts are provided by Q820, E832, and N834. One can recognise an MGS-like domain in the interval 930-1072 (LKIPKKGKIL…QKDNVKNLVL (143 aa)). Residues 930–1072 (LKIPKKGKIL…QKDNVKNLVL (143 aa)) are allosteric domain.

Belongs to the CarB family. Composed of two chains; the small (or glutamine) chain promotes the hydrolysis of glutamine to ammonia, which is used by the large (or ammonia) chain to synthesize carbamoyl phosphate. Tetramer of heterodimers (alpha,beta)4. Mg(2+) is required as a cofactor. Mn(2+) serves as cofactor.

It carries out the reaction hydrogencarbonate + L-glutamine + 2 ATP + H2O = carbamoyl phosphate + L-glutamate + 2 ADP + phosphate + 2 H(+). The catalysed reaction is hydrogencarbonate + NH4(+) + 2 ATP = carbamoyl phosphate + 2 ADP + phosphate + 2 H(+). The protein operates within amino-acid biosynthesis; L-arginine biosynthesis; carbamoyl phosphate from bicarbonate: step 1/1. Its pathway is pyrimidine metabolism; UMP biosynthesis via de novo pathway; (S)-dihydroorotate from bicarbonate: step 1/3. Large subunit of the glutamine-dependent carbamoyl phosphate synthetase (CPSase). CPSase catalyzes the formation of carbamoyl phosphate from the ammonia moiety of glutamine, carbonate, and phosphate donated by ATP, constituting the first step of 2 biosynthetic pathways, one leading to arginine and/or urea and the other to pyrimidine nucleotides. The large subunit (synthetase) binds the substrates ammonia (free or transferred from glutamine from the small subunit), hydrogencarbonate and ATP and carries out an ATP-coupled ligase reaction, activating hydrogencarbonate by forming carboxy phosphate which reacts with ammonia to form carbamoyl phosphate. This Thermoanaerobacter sp. (strain X514) protein is Carbamoyl phosphate synthase large chain.